We begin with the raw amino-acid sequence, 354 residues long: Methionine import ATP-binding protein MetN (354 aa).

Residues Leu8–Ile250 form the ABC transporter domain. ATP is bound at residue Gly42–Ser49.

Belongs to the ABC transporter superfamily. Methionine importer (TC 3.A.1.24) family. The complex is composed of two ATP-binding proteins (MetN), two transmembrane proteins (MetI) and a solute-binding protein (MetQ).

The protein localises to the cell membrane. It catalyses the reaction L-methionine(out) + ATP + H2O = L-methionine(in) + ADP + phosphate + H(+). It carries out the reaction D-methionine(out) + ATP + H2O = D-methionine(in) + ADP + phosphate + H(+). Part of the ABC transporter complex MetNIQ involved in methionine import. Responsible for energy coupling to the transport system. The protein is Methionine import ATP-binding protein MetN of Streptococcus pyogenes serotype M3 (strain ATCC BAA-595 / MGAS315).